The chain runs to 98 residues: Integration host factor subunit alpha (98 aa).

The segment at 50–71 (GNFDLRDKNQRPGRNPKTGEDI) is disordered.

It belongs to the bacterial histone-like protein family. Heterodimer of an alpha and a beta chain.

Its function is as follows. This protein is one of the two subunits of integration host factor, a specific DNA-binding protein that functions in genetic recombination as well as in transcriptional and translational control. In Proteus mirabilis (strain HI4320), this protein is Integration host factor subunit alpha.